The following is an 85-amino-acid chain: U4-theraphotoxin-Hhn1w (85 aa).

Residues 1 to 22 form the signal peptide; sequence MKVTLIAILTCAAVLALHTTAA. A propeptide spanning residues 23 to 48 is cleaved from the precursor; it reads EELEAESQLMEVGMPDTELAAVDEER. 3 cysteine pairs are disulfide-bonded: Cys52–Cys66, Cys56–Cys77, and Cys71–Cys82.

This sequence belongs to the neurotoxin 12 (Hwtx-2) family. 02 (Hwtx-2) subfamily. In terms of tissue distribution, expressed by the venom gland.

It is found in the secreted. In terms of biological role, postsynaptic neurotoxin. In Cyriopagopus hainanus (Chinese bird spider), this protein is U4-theraphotoxin-Hhn1w.